Consider the following 541-residue polypeptide: Chloride channel CLIC-like protein 1 (541 aa).

The N-terminal stretch at 1–18 (MLCSLLLCGCLLLITGYA) is a signal peptide. Topologically, residues 19–184 (HDDDWIDPTD…EDYFGVDPYN (166 aa)) are lumenal. A helical transmembrane segment spans residues 185 to 205 (VFMVLLCLLCIVALVATELWT). Topologically, residues 206 to 217 (YVRWHTQLKRVC) are cytoplasmic. The chain crosses the membrane as a helical span at residues 218–238 (IISFLVSLGWNWIYLYKVAFA). Over 239-329 (QHQANVAKMA…GEFIKALMKE (91 aa)) the chain is Lumenal. The chain crosses the membrane as a helical span at residues 330-350 (IPVLLQIPVLVILALAVLGFC). Residues 351–541 (YGAGQSVPML…GTDPVSSPCG (191 aa)) lie on the Cytoplasmic side of the membrane. Residues 362 to 381 (HFRGPEREPPRALEPDDRRR) are disordered. A compositionally biased stretch (basic and acidic residues) spans 364-381 (RGPEREPPRALEPDDRRR). Residues serine 434 and serine 438 each carry the phosphoserine modification. Phosphothreonine is present on threonine 482. The residue at position 504 (serine 504) is a Phosphoserine. Residues 511–522 (QLKTDSECRPHS) show a composition bias toward basic and acidic residues. A disordered region spans residues 511–541 (QLKTDSECRPHSTEAAAAAARGTDPVSSPCG).

The protein belongs to the chloride channel MCLC family. As to quaternary structure, homomultimers. Interacts with mitochondrial protein PIGBOS1 (via C-terminus); the interaction occurs at the mitochondria-associated endoplasmic reticulum (ER) membrane, a zone of contact between the ER and mitochondrial membranes, but does not appear to play a role in ER-mitochondria tethering and is not affected by ER stress. Interacts with CALR. Expressed in testis (spermatocytes), liver and lung (at protein level). Expressed in spleen, liver, testis, kidney, heart, brain and lung.

It localises to the endoplasmic reticulum membrane. The catalysed reaction is chloride(in) = chloride(out). It catalyses the reaction bromide(in) = bromide(out). It carries out the reaction nitrate(in) = nitrate(out). The enzyme catalyses fluoride(in) = fluoride(out). Functionally, anion-selective channel with Ca(2+)-dependent and voltage-independent gating. Permeable to small monovalent anions with selectivity for bromide &gt; chloride &gt; nitrate &gt; fluoride. Operates in the endoplasmic reticulum (ER) membrane where it mediates chloride efflux to compensate for the loss of positive charges from the ER lumen upon Ca(2+) release. Contributes to the maintenance of ER Ca(2+) pools and activation of unfolded protein response to prevent accumulation of misfolded proteins in the ER lumen. Particularly involved in ER homeostasis mechanisms underlying motor neurons and retinal photoreceptors survival. This Rattus norvegicus (Rat) protein is Chloride channel CLIC-like protein 1.